The chain runs to 716 residues: Leucine-rich repeat neuronal protein 1 (716 aa).

The first 25 residues, 1–25 (MARMSFVLAAYQMVLSLLMTSLTGS), serve as a signal peptide directing secretion. Residues 26–72 (SLQSSECPQLCVCEIRPWFTPQSTYREATTVDCNDLRLTRIPSNLSS) enclose the LRRNT domain. At 26–631 (SLQSSECPQL…DISDQETSTA (606 aa)) the chain is on the extracellular side. The N-linked (GlcNAc...) asparagine glycan is linked to Asn69. LRR repeat units lie at residues 73–95 (DTQV…QQLF), 96–117 (NLTE…GLAN), 120–141 (QLTT…CLQD), 144–165 (NLQE…AFSG), 168–189 (NLLR…WFDS), 192–213 (NLEI…NFKP), 216–237 (NLRS…ALVG), 240–261 (SLES…ALQK), and 264–285 (NLKF…DFKN). N-linked (GlcNAc...) asparagine glycans are attached at residues Asn96, Asn106, and Asn117. Residues 371–424 (NPLRCDCVIHWINSNKTNIRFMEPLSMFCAMPPEYRGQQVKEVLIQDSSEQCLP) enclose the LRRCT domain. An N-linked (GlcNAc...) asparagine glycan is attached at Asn385. The region spanning 424 to 515 (PMISHDTFPN…GADTRVVMIK (92 aa)) is the Ig-like C2-type domain. A disulfide bridge connects residues Cys447 and Cys499. Asn517, Asn582, and Asn611 each carry an N-linked (GlcNAc...) asparagine glycan. In terms of domain architecture, Fibronectin type-III spans 525–617 (QVLKIYVKQT…SCVNVTTKNA (93 aa)). The helical transmembrane segment at 632–652 (LAAVMGSMFAVISLASIAVYI) threads the bilayer. The Cytoplasmic segment spans residues 653 to 716 (AKRFKRKNYH…VDTSRSYYMW (64 aa)). Positions 691-700 (DSEKDKDGTA) are enriched in basic and acidic residues. Positions 691–716 (DSEKDKDGTADTKPTQVDTSRSYYMW) are disordered. A compositionally biased stretch (polar residues) spans 702 to 716 (TKPTQVDTSRSYYMW).

Its subcellular location is the membrane. The chain is Leucine-rich repeat neuronal protein 1 (LRRN1) from Bos taurus (Bovine).